The primary structure comprises 604 residues: Baculoviral IAP repeat-containing protein 3 (604 aa).

3 BIR repeats span residues 29 to 96, 169 to 235, and 255 to 322; these read ELYR…CRFV, ENAR…CPFI, and HAAR…CEYL. Positions 292, 295, 312, and 319 each coordinate Zn(2+). The region spanning 439–529 is the CARD domain; it reads KESNDLLLIR…VLYEHLFVQQ (91 aa). The segment at 557-592 adopts an RING-type zinc-finger fold; that stretch reads CKVCMDKEVSIVFIPCGHLVVCKDCAPSLRKCPICR.

Belongs to the IAP family. Interacts with PRSS25; interaction inhibits apoptotic suppressor activity. The BIR motifs region interacts with TNF receptor associated factors 1 and 2 (TRAF1 and TRAF2) to form a heteromeric complex, which is then recruited to the tumor necrosis factor receptor 2 (TNFR2). Interaction with TRAF2 is required for ubiquitination of IKBKE, degradation of NFKBIA and activation of NF-kappa-B. Interacts with RIP1, RIP2, RIP3, RIP4 and USP19. Auto-ubiquitinated and degraded by the proteasome in apoptotic cells. As to expression, highly expressed in fetal lung, and kidney. In the adult, expression is mainly seen in lymphoid tissues, including spleen, thymus and peripheral blood lymphocytes.

Its subcellular location is the cytoplasm. The protein resides in the nucleus. The catalysed reaction is S-ubiquitinyl-[E2 ubiquitin-conjugating enzyme]-L-cysteine + [acceptor protein]-L-lysine = [E2 ubiquitin-conjugating enzyme]-L-cysteine + N(6)-ubiquitinyl-[acceptor protein]-L-lysine.. With respect to regulation, USP19 regulates the stability of BIRC3/c-IAP2 by preventing its ubiquitination. Its function is as follows. Multi-functional protein which regulates not only caspases and apoptosis, but also modulates inflammatory signaling and immunity, mitogenic kinase signaling and cell proliferation, as well as cell invasion and metastasis. Acts as an E3 ubiquitin-protein ligase regulating NF-kappa-B signaling and regulates both canonical and non-canonical NF-kappa-B signaling by acting in opposite directions: acts as a positive regulator of the canonical pathway and suppresses constitutive activation of non-canonical NF-kappa-B signaling. The target proteins for its E3 ubiquitin-protein ligase activity include: RIPK1, RIPK2, RIPK3, RIPK4, CASP3, CASP7, CASP8, IKBKE, TRAF1, and BCL10. Acts as an important regulator of innate immune signaling via regulation of Toll-like receptors (TLRs), Nodlike receptors (NLRs) and RIG-I like receptors (RLRs), collectively referred to as pattern recognition receptors (PRRs). Protects cells from spontaneous formation of the ripoptosome, a large multi-protein complex that has the capability to kill cancer cells in a caspase-dependent and caspase-independent manner. Suppresses ripoptosome formation by ubiquitinating RIPK1 and CASP8. The chain is Baculoviral IAP repeat-containing protein 3 (BIRC3) from Homo sapiens (Human).